A 703-amino-acid polypeptide reads, in one-letter code: Polyribonucleotide nucleotidyltransferase (703 aa).

Residues Asp485 and Asp491 each contribute to the Mg(2+) site. The KH domain maps to 552–611 (PRAYTINIDTDKIRTLIGTGGKTINKIIEETGVKIDIREDGTVFVLSSDADSANRALKMI). Residues 621 to 689 (GEVYLGKVTK…NQGRVNLSRK (69 aa)) enclose the S1 motif domain.

The protein belongs to the polyribonucleotide nucleotidyltransferase family. Requires Mg(2+) as cofactor.

The protein resides in the cytoplasm. It catalyses the reaction RNA(n+1) + phosphate = RNA(n) + a ribonucleoside 5'-diphosphate. Involved in mRNA degradation. Catalyzes the phosphorolysis of single-stranded polyribonucleotides processively in the 3'- to 5'-direction. The protein is Polyribonucleotide nucleotidyltransferase of Clostridium acetobutylicum (strain ATCC 824 / DSM 792 / JCM 1419 / IAM 19013 / LMG 5710 / NBRC 13948 / NRRL B-527 / VKM B-1787 / 2291 / W).